Here is a 119-residue protein sequence, read N- to C-terminus: Large ribosomal subunit protein uL24 (119 aa).

Belongs to the universal ribosomal protein uL24 family. Part of the 50S ribosomal subunit.

One of two assembly initiator proteins, it binds directly to the 5'-end of the 23S rRNA, where it nucleates assembly of the 50S subunit. Its function is as follows. Located at the polypeptide exit tunnel on the outside of the subunit. This is Large ribosomal subunit protein uL24 from Methanococcus vannielii.